The sequence spans 57 residues: Large ribosomal subunit protein bL32c (57 aa).

Component of the chloroplast large ribosomal subunit (LSU). Mature 70S chloroplast ribosomes of higher plants consist of a small (30S) and a large (50S) subunit. The 30S small subunit contains 1 molecule of ribosomal RNA (16S rRNA) and 24 different proteins. The 50S large subunit contains 3 rRNA molecules (23S, 5S and 4.5S rRNA) and 33 different proteins.

Its subcellular location is the plastid. It localises to the chloroplast. Functionally, component of the chloroplast ribosome (chloro-ribosome), a dedicated translation machinery responsible for the synthesis of chloroplast genome-encoded proteins, including proteins of the transcription and translation machinery and components of the photosynthetic apparatus. The sequence is that of Large ribosomal subunit protein bL32c (rpl32) from Spinacia oleracea (Spinach).